Consider the following 937-residue polypeptide: Translation initiation factor IF-2 (937 aa).

Disordered stretches follow at residues 157-230 and 250-346; these read KEAQ…AARK and IKAP…ESNF. Residues 173–205 are compositionally biased toward basic and acidic residues; sequence EAQKADAAKPVEAKADESAQEEKKRVAAEESKK. Low complexity predominate over residues 252–265; sequence APEPAAPVAAKPAE. Residues 267 to 293 show a composition bias toward basic and acidic residues; sequence TLHKPADKKAGEKKDEKKPAVTADKKS. Positions 295-304 are enriched in polar residues; it reads KSANVSSTWQ. The region spanning 437–606 is the tr-type G domain; it reads PRAPVVTVMG…LLQAEVLELK (170 aa). Residues 446–453 are G1; sequence GHVDHGKT. Residue 446 to 453 participates in GTP binding; sequence GHVDHGKT. The G2 stretch occupies residues 471–475; sequence GITQH. Residues 492 to 495 form a G3 region; it reads DTPG. GTP-binding positions include 492 to 496 and 546 to 549; these read DTPGH and NKID. Positions 546–549 are G4; the sequence is NKID. A G5 region spans residues 582–584; sequence SAK.

This sequence belongs to the TRAFAC class translation factor GTPase superfamily. Classic translation factor GTPase family. IF-2 subfamily.

Its subcellular location is the cytoplasm. Its function is as follows. One of the essential components for the initiation of protein synthesis. Protects formylmethionyl-tRNA from spontaneous hydrolysis and promotes its binding to the 30S ribosomal subunits. Also involved in the hydrolysis of GTP during the formation of the 70S ribosomal complex. This is Translation initiation factor IF-2 from Janthinobacterium sp. (strain Marseille) (Minibacterium massiliensis).